We begin with the raw amino-acid sequence, 30 residues long: Cysteine-rich venom protein mossambin (30 aa).

The tract at residues 1-30 is disordered; it reads NVDFNSESTRRKKKQNEIVDLHNSLRRTVN.

The protein belongs to the CRISP family. Post-translationally, contains 8 disulfide bonds. Expressed by the venom gland.

Its subcellular location is the secreted. Functionally, inhibits calcium-activated potassium channels (KCa), voltage-gated potassium channel (Kv), and the calcium release channel/ryanodine receptor (RyR). In Naja mossambica (Mozambique spitting cobra), this protein is Cysteine-rich venom protein mossambin.